Consider the following 232-residue polypeptide: Large ribosomal subunit protein uL1 (232 aa).

It belongs to the universal ribosomal protein uL1 family. In terms of assembly, part of the 50S ribosomal subunit.

Functionally, binds directly to 23S rRNA. The L1 stalk is quite mobile in the ribosome, and is involved in E site tRNA release. Its function is as follows. Protein L1 is also a translational repressor protein, it controls the translation of the L11 operon by binding to its mRNA. This chain is Large ribosomal subunit protein uL1, found in Chlamydia trachomatis serovar L2 (strain ATCC VR-902B / DSM 19102 / 434/Bu).